The chain runs to 564 residues: Cysteine--tRNA ligase CPS1, chloroplastic/mitochondrial (564 aa).

The N-terminal 43 residues, 1–43 (MAAAVVVRRAAGLIPLLSSRFGARMPLHRALSQIPPPRFCRLL), are a transit peptide targeting the chloroplast and mitochondrion. Position 93 (Cys93) interacts with Zn(2+). A 'HIGH' region motif is present at residues 95–105 (VTPYDDSHIGH). Zn(2+) is bound by residues Cys273, His298, and Glu302. The 'KMSKS' region motif lies at 330 to 334 (KMSKS). ATP is bound at residue Lys333.

Belongs to the class-I aminoacyl-tRNA synthetase family. It depends on Zn(2+) as a cofactor.

Its subcellular location is the plastid. The protein localises to the chloroplast. It is found in the mitochondrion. It catalyses the reaction tRNA(Cys) + L-cysteine + ATP = L-cysteinyl-tRNA(Cys) + AMP + diphosphate. In terms of biological role, nuclear genome-encoded factor required for normal assembly of chloroplast polysomes. The chain is Cysteine--tRNA ligase CPS1, chloroplastic/mitochondrial from Zea mays (Maize).